A 188-amino-acid chain; its full sequence is Deoxycytidylate deaminase (188 aa).

One can recognise a CMP/dCMP-type deaminase domain in the interval 1–171 (MKASTVLQIA…DILRNAGIEV (171 aa)). Cysteine 19, cysteine 49, histidine 94, glutamate 102, and histidine 104 together coordinate Zn(2+). The active-site Proton donor is glutamate 106. Zn(2+) contacts are provided by cysteine 132 and cysteine 135.

It belongs to the cytidine and deoxycytidylate deaminase family. In terms of assembly, homohexamer. Zn(2+) is required as a cofactor.

It catalyses the reaction dCMP + H2O + H(+) = dUMP + NH4(+). Its activity is regulated as follows. Allosteric enzyme whose activity is greatly influenced by the end products of its metabolic pathway, dCTP and dTTP. Supplies the nucleotide substrate for thymidylate synthetase. The sequence is that of Deoxycytidylate deaminase (CD) from Enterobacteria phage T2 (Bacteriophage T2).